Here is an 85-residue protein sequence, read N- to C-terminus: Cell division protein ZapA (85 aa).

Positions 60–85 form a coiled coil; sequence AVNVVHDYLKLKEQYEKLEIQLKEKE.

Belongs to the ZapA family. Type 2 subfamily. In terms of assembly, homodimer. Interacts with FtsZ.

The protein localises to the cytoplasm. Functionally, activator of cell division through the inhibition of FtsZ GTPase activity, therefore promoting FtsZ assembly into bundles of protofilaments necessary for the formation of the division Z ring. It is recruited early at mid-cell but it is not essential for cell division. The protein is Cell division protein ZapA of Bacillus pumilus (strain SAFR-032).